We begin with the raw amino-acid sequence, 61 residues long: Double gene block protein 2 (61 aa).

Residues 1-12 are Cytoplasmic-facing; sequence MACCRCDSSPGD. Residues 13–33 traverse the membrane as a helical; Signal-anchor for type II membrane protein segment; the sequence is YSGALLILFISFVFFYITSLS. Residues 34 to 61 are Lumenal-facing; sequence PQGNTYVHHFDSSSVKTQYVGISTNGDG.

Belongs to the gammacarmovirus double gene block protein 2 family.

It localises to the host endoplasmic reticulum membrane. Its function is as follows. Cell-to-cell movement function. The sequence is that of Double gene block protein 2 from Melon necrotic spot virus (MNSV).